The sequence spans 34 residues: Beta/mu-theraphotoxin-Pe1b (34 aa).

3 cysteine pairs are disulfide-bonded: C2-C16, C9-C21, and C15-C28.

It belongs to the neurotoxin 10 (Hwtx-1) family. 54 (ProTx-1) subfamily. In terms of tissue distribution, expressed by the venom gland.

It localises to the secreted. Functionally, ion channel impairing toxin that inhibits several voltage-gated sodium channels. It acts by inhibiting the inward component of the sodium current and by shifting the voltage dependence of channel activation to more depolarized potentials. Its most potent activity is on Nav1.7/SCN9A (IC(50)=167 nM), followed by Nav1.6/SCN8A (IC(50)=696 nM), and Nav1.2/SCN2A (IC(50)=3.54 uM). This chain is Beta/mu-theraphotoxin-Pe1b, found in Phormingochilus everetti (Malaysian purple earth tiger tarantula).